We begin with the raw amino-acid sequence, 453 residues long: Vacuolar cation/proton exchanger 1b (453 aa).

Over 1 to 67 (MPVSRMMMES…LRSLLANLND (67 aa)) the chain is Cytoplasmic. The helical transmembrane segment at 68–85 (VLLTTRLFLLFPAVLLAI) threads the bilayer. Topologically, residues 86–91 (AATYLH) are extracellular. Residues 92–109 (FGQVWVFVLSLIGLVPLA) form a helical membrane-spanning segment. The Cytoplasmic segment spans residues 110 to 126 (ERLSFLTEQIAFYTGPT). Residues 127–147 (VGGLLNATFGNVTEVIIALLA) traverse the membrane as a helical segment. Positions 136–171 (GNVTEVIIALLALREGKIEVVKCSLLGSILSNLLLV) are cation selection. Residues 148 to 160 (LREGKIEVVKCSL) lie on the Extracellular side of the membrane. The chain crosses the membrane as a helical span at residues 161–181 (LGSILSNLLLVLGTSLFLAGI). Topologically, residues 182 to 194 (ANLRAHQPYDTKQ) are cytoplasmic. Residues 195–215 (AHVNTALLMLAVLCHSLPLML) form a helical membrane-spanning segment. Over 216–232 (RYAVTSGDHAIVSGDAA) the chain is Extracellular. The chain crosses the membrane as a helical span at residues 233–253 (LHLSRACSILMLIAYLAYLFF). At 254–283 (QLNTHRQLFEPQQVEDDDDDDLVIAQDDEP) the chain is on the cytoplasmic side. The helical transmembrane segment at 284–304 (VLGFSSAMIWLALMTLLTALL) threads the bilayer. Residues 305–327 (SGYVVSTIEAASESWELSVSFIS) lie on the Extracellular side of the membrane. Residues 328-348 (IILLPIVGNAAEHAGAVIFAL) form a helical membrane-spanning segment. Residues 335 to 370 (GNAAEHAGAVIFALKNKMDITLGVSLGSATQISMFV) are cation selection. Topologically, residues 349 to 364 (KNKMDITLGVSLGSAT) are cytoplasmic. A helical transmembrane segment spans residues 365–385 (QISMFVVPVSVIVAWTMGIPM). At 386–388 (DLD) the chain is on the extracellular side. A helical membrane pass occupies residues 389–409 (FNLLETGSLFLAILVTAFTLQ). At 410–414 (EGESH) the chain is on the cytoplasmic side. The chain crosses the membrane as a helical span at residues 415–435 (YLKGLILVLCYAVISVCFFVI). The Extracellular segment spans residues 436-453 (RRRSAGGTDGVHHLDVIV).

The protein belongs to the Ca(2+):cation antiporter (CaCA) (TC 2.A.19) family. Cation/proton exchanger (CAX) subfamily. In terms of tissue distribution, expressed in embryo and roots.

The protein resides in the vacuole membrane. Vacuolar cation/proton exchanger (CAX). Translocates Ca(2+) and other metal ions into vacuoles using the proton gradient formed by H(+)-ATPase and H(+)-pyrophosphatase. This Oryza sativa subsp. japonica (Rice) protein is Vacuolar cation/proton exchanger 1b (CAX1b).